We begin with the raw amino-acid sequence, 306 residues long: sn-1-specific diacylglycerol lipase ABHD11 (306 aa).

A disordered region spans residues 19–40 (GPSFARVPVAPSSSSGGRGGAE). A compositionally biased stretch (low complexity) spans 23–33 (ARVPVAPSSSS). Residue lysine 78 is modified to N6-succinyllysine. Catalysis depends on charge relay system residues serine 132, aspartate 228, and histidine 287.

The protein belongs to the AB hydrolase superfamily. In terms of assembly, interacts with OGDH and DLST; this interaction maintains the functional lipoylation of the 2-oxoglutarate dehydrogenase complex. In terms of processing, phosphorylated. Ubiquitously expressed. Highly expressed in small intestine, prostate and thyroid, while aorta and colon tissues exhibit weak expression levels.

Its subcellular location is the mitochondrion. It localises to the mitochondrion matrix. The catalysed reaction is 1-octadecanoyl-2-(5Z,8Z,11Z,14Z-eicosatetraenoyl)-sn-glycerol + H2O = 2-(5Z,8Z,11Z,14Z-eicosatetraenoyl)-glycerol + octadecanoate + H(+). The enzyme catalyses a 1,2-diacyl-sn-glycerol + H2O = a 2-acylglycerol + a fatty acid + H(+). It carries out the reaction a 1,3-diacyl-sn-glycerol + H2O = a 1-acyl-sn-glycerol + a fatty acid + H(+). It catalyses the reaction 1-octadecanoyl-2-(9Z-octadecenoyl)-sn-glycerol + H2O = 2-(9Z-octadecenoyl)-glycerol + octadecanoate + H(+). The catalysed reaction is 1-octadecanoyl-2-(4Z,7Z,10Z,13Z,16Z,19Z-docosahexaenoyl)-sn-glycerol + H2O = 2-(4Z,7Z,10Z,13Z,16Z,19Z-docosahexaenoyl)-glycerol + octadecanoate + H(+). The enzyme catalyses 1,2-didecanoylglycerol + H2O = decanoylglycerol + decanoate + H(+). Its function is as follows. Catalyzes the hydrolysis of diacylglycerol in vitro and may function as a key regulator in lipid metabolism, namely by regulating the intracellular levels of diacylglycerol. 1,2-diacyl-sn-glycerols are the preferred substrate over 1,3-diacyl-sn-glycerols. The enzyme hydrolyzes stearate in preference to palmitate from the sn-1 position of 1,2-diacyl-sn-glycerols. Maintains the functional lipoylation of the 2-oxoglutarate dehydrogenase complex (OGDHc) through its interaction with the OGDHc by preventing the formation of lipoyl adducts. In addition, is also required for the expansion and differentiation of embryonic stem cells (ESCs). The polypeptide is sn-1-specific diacylglycerol lipase ABHD11 (Homo sapiens (Human)).